We begin with the raw amino-acid sequence, 137 residues long: Probable 4-amino-4-deoxy-L-arabinose-phosphoundecaprenol flippase subunit ArnF (137 aa).

Topologically, residues 1–5 (MNVPR) are cytoplasmic. Residues 6–26 (GWLAALGSVLLVSAAQLGMRW) traverse the membrane as a helical segment. Over 27–44 (GMSRLPLPEAWAGQTPEH) the chain is Periplasmic. The helical transmembrane segment at 45–65 (AALLAVALAVAAYAASLLCWL) threads the bilayer. Topologically, residues 66–76 (AALRHLPLGRA) are cytoplasmic. The helical transmembrane segment at 77–97 (YSLLSASYALVYLLAASLPAF) threads the bilayer. Over 98 to 100 (EET) the chain is Periplasmic. A helical membrane pass occupies residues 101-121 (FTTGKTLGVGLVVLGVLTVNA). Residues 122–137 (RRTAAAPAHHPSRKAL) lie on the Cytoplasmic side of the membrane.

Belongs to the ArnF family. Heterodimer of ArnE and ArnF.

The protein localises to the cell inner membrane. The protein operates within bacterial outer membrane biogenesis; lipopolysaccharide biosynthesis. Translocates 4-amino-4-deoxy-L-arabinose-phosphoundecaprenol (alpha-L-Ara4N-phosphoundecaprenol) from the cytoplasmic to the periplasmic side of the inner membrane. This Pseudomonas paraeruginosa (strain DSM 24068 / PA7) (Pseudomonas aeruginosa (strain PA7)) protein is Probable 4-amino-4-deoxy-L-arabinose-phosphoundecaprenol flippase subunit ArnF.